The chain runs to 605 residues: Dihydrogeodin oxidase (605 aa).

The N-terminal stretch at 1-18 is a signal peptide; the sequence is MPSLKDWVVAGLVPMTIA. Residues Asn-27, Asn-107, and Asn-112 are each glycosylated (N-linked (GlcNAc...) asparagine). 3 consecutive Plastocyanin-like domains span residues 65 to 183, 189 to 347, and 424 to 567; these read TVTQ…GPSS, DLGP…YDES, and YVDW…KIKP. 4 residues coordinate Cu cation: His-117, His-119, His-161, and His-163. N-linked (GlcNAc...) asparagine glycosylation is found at Asn-278 and Asn-467. His-484, His-487, His-489, His-543, Cys-544, His-545, and His-549 together coordinate Cu cation.

This sequence belongs to the multicopper oxidase family. Cu cation serves as cofactor.

The catalysed reaction is 2 dihydrogeodin + O2 + 2 H(+) = 2 (+)-geodin + 2 H2O. Its pathway is secondary metabolite biosynthesis. In terms of biological role, dihydrogeodin oxidase; part of the gene cluster that mediates the biosynthesis of geodin, an intermediate in the biosynthesis of other natural products. The pathway begins with the synthesis of atrochrysone thioester by the polyketide synthase (PKS) gedC. The atrochrysone carboxyl ACP thioesterase gedB then breaks the thioester bond and releases the atrochrysone carboxylic acid from gedC. The atrochrysone carboxylic acid is then converted to atrochrysone which is further transformed into emodinanthrone. The next step is performed by the emodinanthrone oxygenase gedH that catalyzes the oxidation of emodinanthrone to emodin. Emodin O-methyltransferase encoded probably by gedA then catalyzes methylation of the 8-hydroxy group of emodin to form questin. Ring cleavage of questin by questin oxidase gedK leads to desmethylsulochrin via several intermediates including questin epoxide. Another methylation step probably catalyzed by methyltransferase gedG leads to the formation of sulochrin which is further converted to dihydrogeodin by the sulochrin halogenase gedL. Finally, the dihydrogeodin oxidase gedJ catalyzes the stereospecific phenol oxidative coupling reaction converting dihydrogeodin to geodin. The protein is Dihydrogeodin oxidase of Aspergillus terreus (strain NIH 2624 / FGSC A1156).